A 626-amino-acid polypeptide reads, in one-letter code: L-amino-acid oxidase 4 (626 aa).

An N-terminal signal peptide occupies residues 1–18; the sequence is KSFFRSLVAASLVIVSYS. N-linked (GlcNAc...) asparagine glycosylation is present at Asn54. FAD-binding residues include Gly75, Glu94, Ala95, Arg102, Met122, and Arg123. An L-glutamate-binding site is contributed by Arg123. Arg123 serves as a coordination point for L-glutamine. Arg123 serves as a coordination point for L-lysine. Arg123 lines the L-phenylalanine pocket. N-linked (GlcNAc...) asparagine glycosylation is found at Asn164, Asn193, and Asn331. An FAD-binding site is contributed by Val334. Tyr457 is a binding site for L-glutamate. Tyr457 contacts L-glutamine. L-lysine is bound at residue Tyr457. An L-phenylalanine-binding site is contributed by Tyr457. Residue Glu551 participates in FAD binding. Ala558 is a binding site for L-phenylalanine. Trp559 and Val560 together coordinate FAD.

This sequence belongs to the flavin monoamine oxidase family. FIG1 subfamily. In terms of assembly, homodimer. FAD serves as cofactor. Out of the 4 glycosylated residues, Asn-54 is hypermannosylated. The presence of a hypermannosylated N-glycan on Asn-54 leads to adoption of a more active conformation in the absence of acid activation.

It localises to the secreted. The catalysed reaction is an L-alpha-amino acid + O2 + H2O = a 2-oxocarboxylate + H2O2 + NH4(+). The enzyme catalyses L-lysine + O2 + H2O = 6-amino-2-oxohexanoate + H2O2 + NH4(+). It carries out the reaction L-glutamate + O2 + H2O = H2O2 + 2-oxoglutarate + NH4(+). It catalyses the reaction L-arginine + O2 + H2O = 5-guanidino-2-oxopentanoate + H2O2 + NH4(+). The catalysed reaction is L-leucine + O2 + H2O = 4-methyl-2-oxopentanoate + H2O2 + NH4(+). The enzyme catalyses L-asparagine + O2 + H2O = 2-oxosuccinamate + H2O2 + NH4(+). It carries out the reaction L-histidine + O2 + H2O = 3-(imidazol-5-yl)pyruvate + H2O2 + NH4(+). It catalyses the reaction L-isoleucine + O2 + H2O = (S)-3-methyl-2-oxopentanoate + H2O2 + NH4(+). The catalysed reaction is L-methionine + O2 + H2O = 4-methylsulfanyl-2-oxobutanoate + H2O2 + NH4(+). The enzyme catalyses L-phenylalanine + O2 + H2O = 3-phenylpyruvate + H2O2 + NH4(+). It carries out the reaction L-tyrosine + O2 + H2O = 3-(4-hydroxyphenyl)pyruvate + H2O2 + NH4(+). It catalyses the reaction L-glutamine + O2 + H2O = 2-oxoglutaramate + H2O2 + NH4(+). The catalysed reaction is L-alanine + O2 + H2O = pyruvate + H2O2 + NH4(+). LAAO4 is activated by exposure to acidic pH, the detergent sodium dodecyl sulfate, or freezing. Its function is as follows. Catalyzes the oxidative deamination of L-amino acids with molecular oxygen to the corresponding alpha-keto acids and ammonia. L-glutamine shows the highest relative activity but LAAO4 has a broad substrate specificity, including L-amino acids with big aromatic, acidic and basic side chains. Methyl esters of these L-amino acids are also accepted, ethyl esters are converted but with lower activity, whereas D-Amino acids are not converted. No reaction is detected for small polar amino acids such as L-cysteine or L-aspartate, and very little for small, branched hydrophobic amino acids like L-valine. The chain is L-amino-acid oxidase 4 from Hebeloma cylindrosporum.